Consider the following 556-residue polypeptide: 2-succinyl-5-enolpyruvyl-6-hydroxy-3-cyclohexene-1-carboxylate synthase (556 aa).

It belongs to the TPP enzyme family. MenD subfamily. Homodimer. Mg(2+) is required as a cofactor. Mn(2+) serves as cofactor. The cofactor is thiamine diphosphate.

The catalysed reaction is isochorismate + 2-oxoglutarate + H(+) = 5-enolpyruvoyl-6-hydroxy-2-succinyl-cyclohex-3-ene-1-carboxylate + CO2. It participates in quinol/quinone metabolism; 1,4-dihydroxy-2-naphthoate biosynthesis; 1,4-dihydroxy-2-naphthoate from chorismate: step 2/7. It functions in the pathway quinol/quinone metabolism; menaquinone biosynthesis. Its function is as follows. Catalyzes the thiamine diphosphate-dependent decarboxylation of 2-oxoglutarate and the subsequent addition of the resulting succinic semialdehyde-thiamine pyrophosphate anion to isochorismate to yield 2-succinyl-5-enolpyruvyl-6-hydroxy-3-cyclohexene-1-carboxylate (SEPHCHC). The sequence is that of 2-succinyl-5-enolpyruvyl-6-hydroxy-3-cyclohexene-1-carboxylate synthase from Shigella boydii serotype 18 (strain CDC 3083-94 / BS512).